Here is a 231-residue protein sequence, read N- to C-terminus: NifU-like protein 1, chloroplastic (231 aa).

A chloroplast-targeting transit peptide spans 1-69; it reads MMASLATSIS…SSQGEKISPL (69 aa).

It belongs to the NifU family. In terms of assembly, homodimer; disulfide-linked. As to expression, predominantly expressed in floral stalks and siliques. Expressed in leaves, cauline leaves, flower stalks and flowers (at protein level).

It localises to the plastid. The protein resides in the chloroplast stroma. In terms of biological role, molecular scaffold for [Fe-S] cluster assembly of chloroplastic iron-sulfur proteins. The polypeptide is NifU-like protein 1, chloroplastic (NIFU1) (Arabidopsis thaliana (Mouse-ear cress)).